The sequence spans 301 residues: NADH-cytochrome b5 reductase 3 (301 aa).

G2 is lipidated: N-myristoyl glycine. Residues 40–152 form the FAD-binding FR-type domain; the sequence is DIKYSLRLID…RGPNGLLVYQ (113 aa). K42 bears the N6-acetyllysine mark. Residue Y43 is modified to Phosphotyrosine. FAD is bound by residues R92, P93, Y94, V109, K111, and F114. K120 carries the N6-acetyllysine modification. FAD contacts are provided by K126, M127, S128, and T185.

It belongs to the flavoprotein pyridine nucleotide cytochrome reductase family. In terms of assembly, component of a complex composed of cytochrome b5, NADH-cytochrome b5 reductase (CYB5R3) and MTARC2. Interacts with MTLN; the interaction is required to maintain cellular lipid composition and leads to stimulation of mitochondrial respiratory complex I activity. Requires FAD as cofactor.

It is found in the endoplasmic reticulum membrane. The protein resides in the mitochondrion outer membrane. It carries out the reaction 2 Fe(III)-[cytochrome b5] + NADH = 2 Fe(II)-[cytochrome b5] + NAD(+) + H(+). In terms of biological role, catalyzes the reduction of two molecules of cytochrome b5 using NADH as the electron donor. This chain is NADH-cytochrome b5 reductase 3 (CYB5R3), found in Macaca fascicularis (Crab-eating macaque).